A 197-amino-acid chain; its full sequence is Elongation factor Ts (197 aa).

Positions 81 to 84 are involved in Mg(2+) ion dislocation from EF-Tu; sequence TDFV.

This sequence belongs to the EF-Ts family.

The protein resides in the cytoplasm. Functionally, associates with the EF-Tu.GDP complex and induces the exchange of GDP to GTP. It remains bound to the aminoacyl-tRNA.EF-Tu.GTP complex up to the GTP hydrolysis stage on the ribosome. The protein is Elongation factor Ts of Persephonella marina (strain DSM 14350 / EX-H1).